We begin with the raw amino-acid sequence, 94 residues long: Large ribosomal subunit protein bL25 (94 aa).

Belongs to the bacterial ribosomal protein bL25 family. As to quaternary structure, part of the 50S ribosomal subunit; part of the 5S rRNA/L5/L18/L25 subcomplex. Contacts the 5S rRNA. Binds to the 5S rRNA independently of L5 and L18.

Its function is as follows. This is one of the proteins that binds to the 5S RNA in the ribosome where it forms part of the central protuberance. The protein is Large ribosomal subunit protein bL25 of Serratia proteamaculans (strain 568).